We begin with the raw amino-acid sequence, 442 residues long: Histidinol dehydrogenase (442 aa).

NAD(+)-binding residues include Y138, Q196, and N219. 3 residues coordinate substrate: S245, Q267, and H270. Q267 and H270 together coordinate Zn(2+). Catalysis depends on proton acceptor residues E334 and H335. Substrate-binding residues include H335, D368, E422, and H427. D368 serves as a coordination point for Zn(2+). H427 contacts Zn(2+).

The protein belongs to the histidinol dehydrogenase family. As to quaternary structure, homodimer. It depends on Zn(2+) as a cofactor.

It carries out the reaction L-histidinol + 2 NAD(+) + H2O = L-histidine + 2 NADH + 3 H(+). It functions in the pathway amino-acid biosynthesis; L-histidine biosynthesis; L-histidine from 5-phospho-alpha-D-ribose 1-diphosphate: step 9/9. Functionally, catalyzes the sequential NAD-dependent oxidations of L-histidinol to L-histidinaldehyde and then to L-histidine. The polypeptide is Histidinol dehydrogenase (Pectobacterium atrosepticum (strain SCRI 1043 / ATCC BAA-672) (Erwinia carotovora subsp. atroseptica)).